Consider the following 405-residue polypeptide: Nicotinate phosphoribosyltransferase (405 aa).

At H230 the chain carries Phosphohistidine; by autocatalysis.

Belongs to the NAPRTase family. Post-translationally, transiently phosphorylated on a His residue during the reaction cycle. Phosphorylation strongly increases the affinity for substrates and increases the rate of nicotinate D-ribonucleotide production. Dephosphorylation regenerates the low-affinity form of the enzyme, leading to product release.

It carries out the reaction nicotinate + 5-phospho-alpha-D-ribose 1-diphosphate + ATP + H2O = nicotinate beta-D-ribonucleotide + ADP + phosphate + diphosphate. The protein operates within cofactor biosynthesis; NAD(+) biosynthesis; nicotinate D-ribonucleotide from nicotinate: step 1/1. Catalyzes the synthesis of beta-nicotinate D-ribonucleotide from nicotinate and 5-phospho-D-ribose 1-phosphate at the expense of ATP. This chain is Nicotinate phosphoribosyltransferase, found in Bordetella bronchiseptica (strain ATCC BAA-588 / NCTC 13252 / RB50) (Alcaligenes bronchisepticus).